A 121-amino-acid polypeptide reads, in one-letter code: Large ribosomal subunit protein bL12 (121 aa).

Belongs to the bacterial ribosomal protein bL12 family. In terms of assembly, homodimer. Part of the ribosomal stalk of the 50S ribosomal subunit. Forms a multimeric L10(L12)X complex, where L10 forms an elongated spine to which 2 to 4 L12 dimers bind in a sequential fashion. Binds GTP-bound translation factors.

Forms part of the ribosomal stalk which helps the ribosome interact with GTP-bound translation factors. Is thus essential for accurate translation. This Alkaliphilus oremlandii (strain OhILAs) (Clostridium oremlandii (strain OhILAs)) protein is Large ribosomal subunit protein bL12.